The chain runs to 1807 residues: Vitellogenin-A2 (1807 aa).

Residues 1 to 15 (MKGIVLALLLALAGS) form the signal peptide. In terms of domain architecture, Vitellogenin spans 24–664 (FSESKISVYN…SANTMFPVFI (641 aa)). Positions 953 to 974 (TSAEGASMMEDSSEMGPKKYSA) are disordered. Asn-1094 carries an N-linked (GlcNAc...) asparagine glycan. A disordered region spans residues 1095-1320 (ETALYRSKQK…SSESSSSSSE (226 aa)). The segment covering 1101–1111 (SKQKKKNKIHN) has biased composition (basic residues). The span at 1112–1123 (RRLDAEVVEARK) shows a compositional bias: basic and acidic residues. Low complexity predominate over residues 1126–1163 (SSLSSSSSSSSSSSSSSSSSSSSSSSSSPSSSSSSSYS). The segment covering 1187–1198 (QNKKRNLQENRK) has biased composition (basic and acidic residues). Residues 1205–1232 (SSSSSSSSSSSSSSSSSSSSSSSSSSSS) are compositionally biased toward low complexity. The span at 1233 to 1247 (EENRPHKNRQHDNKQ) shows a compositional bias: basic and acidic residues. 2 stretches are compositionally biased toward low complexity: residues 1263–1276 (SESS…SSSE) and 1309–1320 (SSSSESSSSSSE). The region spanning 1536–1714 (GECKVAQDQI…SWILPAESCS (179 aa)) is the VWFD domain. Disulfide bonds link Cys-1538-Cys-1677 and Cys-1561-Cys-1713.

In terms of tissue distribution, produced by the liver, secreted into the blood and then sequestered by receptor mediated endocytosis into growing oocytes, where it is generally cleaved, giving rise to the respective yolk components.

Precursor of the major egg-yolk proteins that are sources of nutrients during early development of oviparous organisms. The polypeptide is Vitellogenin-A2 (Xenopus laevis (African clawed frog)).